Consider the following 143-residue polypeptide: Large ribosomal subunit protein uL15 (143 aa).

The disordered stretch occupies residues 1 to 45 (MLLNTVQPGVGAKHAKRRVGRGIGSGLGKTCGRGHKGQKSRAGGF). Positions 21–31 (RGIGSGLGKTC) are enriched in gly residues.

The protein belongs to the universal ribosomal protein uL15 family. As to quaternary structure, part of the 50S ribosomal subunit.

Functionally, binds to the 23S rRNA. The protein is Large ribosomal subunit protein uL15 of Chromobacterium violaceum (strain ATCC 12472 / DSM 30191 / JCM 1249 / CCUG 213 / NBRC 12614 / NCIMB 9131 / NCTC 9757 / MK).